The primary structure comprises 592 residues: Protein US23 (592 aa).

Residues 407-491 (PRSLGDGEEE…NNVVPNVDRR (85 aa)) form a disordered region. Residues 460-481 (ADDEEQGEDDDDSGAEPMEPEE) show a composition bias toward acidic residues.

This sequence belongs to the herpesviridae US22 family.

Its subcellular location is the virion tegument. The protein is Protein US23 (US23) of Homo sapiens (Human).